Reading from the N-terminus, the 65-residue chain is Sodium channel alpha-toxin Acra4 (65 aa).

Residues 2 to 63 enclose the LCN-type CS-alpha/beta domain; sequence RDGYIVDDKN…PIKDPSYKCH (62 aa). 4 cysteine pairs are disulfide-bonded: Cys-12–Cys-62, Cys-16–Cys-34, Cys-20–Cys-44, and Cys-24–Cys-46. Arg-65 is a propeptide (removed by a carboxypeptidase).

This sequence belongs to the long (4 C-C) scorpion toxin superfamily. Sodium channel inhibitor family. Alpha subfamily. Expressed by the venom gland.

Its subcellular location is the secreted. Functionally, alpha toxins bind voltage-independently at site-3 of sodium channels (Nav) and inhibit the inactivation of the activated channels, thereby blocking neuronal transmission. Electrophysiological studies of this were performed using sodium-channels expressed in F11 cell culture, by patch-clamp recordings. Affinity of this toxin toward sodium channels in F11 cell line is in the order of 1 uM concentration. The protein is Sodium channel alpha-toxin Acra4 of Androctonus crassicauda (Arabian fat-tailed scorpion).